Here is a 290-residue protein sequence, read N- to C-terminus: Short chain dehydrogenase/reductase nsrO (290 aa).

Positions 37 and 149 each coordinate NADP(+). Residues serine 168 and tyrosine 182 each act as proton donor in the active site. The NADP(+) site is built by tyrosine 182, lysine 186, and threonine 221. The Lowers pKa of active site Tyr role is filled by lysine 186.

The protein belongs to the short-chain dehydrogenases/reductases (SDR) family.

It functions in the pathway secondary metabolite biosynthesis. Short chain dehydrogenase/reductase; part of the gene cluster that mediates the biosynthesis of the tetrahydroxanthone dimer neosartorin, which exhibits antibacterial activity. The two different monomeric units appear to be synthesized by the same set of enzymes, among which the Baeyer-Villiger monooxygenase nsrF is the key enzyme for the divergence of the biosynthetic routes. The pathway begins with the synthesis of atrochrysone thioester by the polyketide synthase nsrB. The atrochrysone carboxyl ACP thioesterase nsrC then breaks the thioester bond and releases the atrochrysone carboxylic acid from AacuL. Atrochrysone carboxylic acid is decarboxylated by the decarboxylase nsrE, and oxidized by the anthrone oxygenase nsrD to yield emodin. Emodin is then reduced to emodin hydroquinone by the oxidoreductase nsrR. A-ring reduction by the short chain dehydrogenase nsrJ, dehydration by the scytalone dehydratase-like protein nsrI and probable spontaneous re-oxidation, results in overall deoxygenation to chrysophanol. The Baeyer-Villiger monooxygenase nsrF accepts chrysophanol as a substrate to insert one oxygen atom at two different positions to yield the precursors of both monomric units. NsrF is promiscuous/flexible in interacting with the 2 (non methylated and methylated) aromatic rings of chrysophanol, thus diverging the biosynthetic pathway at this point. After the hydrolysis of the lactones, methylesterification by the methyltransferase nsrG yields respectively moniliphenone and 2,2',6'-trihydroxy-4-methyl-6-methoxya-cyldiphenylmethanone. The next steps are the hydroxylation by the FAD-dependent monooxygenase nsrK, followed by isomerization by the monooxygenase nsrQ. The short chain dehydrogenase/reductase nsrO then catalyzes the C-5 ketoreduction to give the xanthone skeleton of blennolide C and 5-acetylblennolide A. The acetyltransferase nsrL has a strict substrate specificity and uses only blennolide A but not blennolide C to yield 5-acetylblennolide A as the single-acetylated product. In the final step of the biosynthesis, the heterodimerization of the 2 xanthones, blennolide C and 5-acetylblennolide A, is catalyzed by the cytochrome P450 monooxygenase nsrP. NsrP can utilize at least three different xanthones as its substrates to perform the dimerization reaction. This is Short chain dehydrogenase/reductase nsrO from Aspergillus novofumigatus (strain IBT 16806).